The sequence spans 38 residues: Large ribosomal subunit protein bL36 (38 aa).

This sequence belongs to the bacterial ribosomal protein bL36 family.

This chain is Large ribosomal subunit protein bL36, found in Paraburkholderia phymatum (strain DSM 17167 / CIP 108236 / LMG 21445 / STM815) (Burkholderia phymatum).